Here is a 1188-residue protein sequence, read N- to C-terminus: Zinc finger SWIM domain-containing protein 5 (1188 aa).

Over residues 1-10 the composition is skewed to basic and acidic residues; sequence MAEGGEREEL. 2 disordered regions span residues 1–46 and 123–171; these read MAEG…GAGG and AGAA…TGTA. Low complexity-rich tracts occupy residues 126 to 136 and 146 to 155; these read AAGAAGASPVE and AAPAGSAPGA. A compositionally biased stretch (gly residues) spans 156–171; that stretch reads AGAGSSPGLGAGTGTA. The SWIM-type zinc-finger motif lies at 222-259; sequence YKVAISFDRCKITSVSCGCGNKDIFYCAHVVALSLYRI.

This chain is Zinc finger SWIM domain-containing protein 5 (Zswim5), found in Mus musculus (Mouse).